A 472-amino-acid chain; its full sequence is Sad1-interacting factor 3 (472 aa).

Disordered stretches follow at residues 1-47 (MSTK…PRFG) and 197-223 (SSGP…DKPD). Topologically, residues 1-443 (MSTKDKLNLP…KSSADRKMNS (443 aa)) are lumenal. The span at 30 to 40 (NSESTRITPQH) shows a compositional bias: polar residues. Position 42 is a phosphoserine (serine 42). Residues 444–464 (ITWIIIILISLFVIIFTLEVI) traverse the membrane as a helical segment. Over 465–472 (LRLRWAHR) the chain is Cytoplasmic.

This sequence belongs to the RMD1/sif2 family. Interacts with sad1.

It is found in the nucleus membrane. The chain is Sad1-interacting factor 3 (sif3) from Schizosaccharomyces pombe (strain 972 / ATCC 24843) (Fission yeast).